The sequence spans 156 residues: Small ribosomal subunit protein uS7 (156 aa).

It belongs to the universal ribosomal protein uS7 family. In terms of assembly, part of the 30S ribosomal subunit. Contacts proteins S9 and S11.

Its function is as follows. One of the primary rRNA binding proteins, it binds directly to 16S rRNA where it nucleates assembly of the head domain of the 30S subunit. Is located at the subunit interface close to the decoding center, probably blocks exit of the E-site tRNA. This is Small ribosomal subunit protein uS7 from Mycobacterium bovis (strain ATCC BAA-935 / AF2122/97).